Reading from the N-terminus, the 281-residue chain is F-actin-capping protein subunit alpha (281 aa).

It belongs to the F-actin-capping protein alpha subunit family. Component of the F-actin capping complex, composed of a heterodimer of an alpha and a beta subunit.

It localises to the cytoplasm. It is found in the cytoskeleton. F-actin-capping proteins bind in a Ca(2+)-independent manner to the fast growing ends of actin filaments (barbed end) thereby blocking the exchange of subunits at these ends. Unlike other capping proteins (such as gelsolin and severin), these proteins do not sever actin filaments. In Dictyostelium discoideum (Social amoeba), this protein is F-actin-capping protein subunit alpha (acpB).